A 399-amino-acid chain; its full sequence is Elongation factor Tu (399 aa).

Residues 10–209 form the tr-type G domain; that stretch reads KPHVNIGTIG…EVDAYIPTPE (200 aa). The interval 19–26 is G1; sequence GHVDHGKT. 19-26 contacts GTP; sequence GHVDHGKT. T26 contributes to the Mg(2+) binding site. The G2 stretch occupies residues 60 to 64; that stretch reads GITIA. The tract at residues 81–84 is G3; that stretch reads DCPG. GTP-binding positions include 81–85 and 136–139; these read DCPGH and NKQD. Positions 136-139 are G4; it reads NKQD. The interval 174-176 is G5; the sequence is SAL.

This sequence belongs to the TRAFAC class translation factor GTPase superfamily. Classic translation factor GTPase family. EF-Tu/EF-1A subfamily. As to quaternary structure, monomer.

It localises to the cytoplasm. The catalysed reaction is GTP + H2O = GDP + phosphate + H(+). Its function is as follows. GTP hydrolase that promotes the GTP-dependent binding of aminoacyl-tRNA to the A-site of ribosomes during protein biosynthesis. The protein is Elongation factor Tu of Helicobacter pylori (strain Shi470).